The chain runs to 437 residues: Enolase (437 aa).

Residues H160 and E169 each coordinate substrate. The active-site Proton donor is E212. Positions 247, 296, and 321 each coordinate Mg(2+). Substrate contacts are provided by E296 and D321. The Proton acceptor role is filled by K346. Residues 373 to 376 and K397 contribute to the substrate site; that span reads SHRS.

Belongs to the enolase family. Homodimer. The cofactor is Mg(2+).

It is found in the cytoplasm. It catalyses the reaction (2R)-2-phosphoglycerate = phosphoenolpyruvate + H2O. Its pathway is carbohydrate degradation; glycolysis; pyruvate from D-glyceraldehyde 3-phosphate: step 4/5. The polypeptide is Enolase (ENO) (Eremothecium gossypii (strain ATCC 10895 / CBS 109.51 / FGSC 9923 / NRRL Y-1056) (Yeast)).